A 93-amino-acid chain; its full sequence is Co-chaperonin GroES (93 aa).

The protein belongs to the GroES chaperonin family. Heptamer of 7 subunits arranged in a ring. Interacts with the chaperonin GroEL.

It localises to the cytoplasm. Its function is as follows. Together with the chaperonin GroEL, plays an essential role in assisting protein folding. The GroEL-GroES system forms a nano-cage that allows encapsulation of the non-native substrate proteins and provides a physical environment optimized to promote and accelerate protein folding. GroES binds to the apical surface of the GroEL ring, thereby capping the opening of the GroEL channel. In Streptococcus anginosus, this protein is Co-chaperonin GroES.